The primary structure comprises 608 residues: MDTNQELKTSEYLKGIVSNLPEKPGIYQYLNAEGTIIYVGKAKNLKRRVYSYFSKEHQPGKTRVLVSKIADIRYIVVNSEEDALLLENNLIKKYKPRYNVLLKDDKTYPSICVQNEYFPRVFKTRRIIRNGSSYYGPYSHSPSMHAVLDLIKHLYPLRTCNLNLSPENIRAGKFNVCLEYHIKNCAGPCIGLQSQEEYLKNIAEIKEILKGNTQEISRLLYQRMQDLAAEMKFEEAQKVKEKYALIENYRSKSEVVSSVLHNIDVFSIEEDGEKSAFINYLHITNGAINQAFTFEYKKKLNETKEELLTLGIIEMRERYKSASREIIVPFDIEIELNDVTFTIPQRGDKKKLLELSLLNVKQYKADRMKQAEKLNPEQRSMRLMKEIQQELHLDRLPMQIECFDNSNIQGTDAVAACVVFKKAKPSKSDYRKYNIKTVVGADDYASMKEVVRRRYQRAIEEESPLPDLIITDGGKGQMEVVRQVMEELQLDIPIAGLAKDRKHRTSEVLFGFPPQTIGIKQHSPLFRLLEQIQDEVHRFAITFHRDKRSKRQVASALDNIKGIGEKTKTALLKEFKSVKRIKEATIEEVSAIIGESKAKIIKEGLDNH.

Residues 22 to 100 enclose the GIY-YIG domain; it reads EKPGIYQYLN…IKKYKPRYNV (79 aa). Residues 214-249 form the UVR domain; it reads QEISRLLYQRMQDLAAEMKFEEAQKVKEKYALIENY.

Belongs to the UvrC family. In terms of assembly, interacts with UvrB in an incision complex.

It is found in the cytoplasm. Functionally, the UvrABC repair system catalyzes the recognition and processing of DNA lesions. UvrC both incises the 5' and 3' sides of the lesion. The N-terminal half is responsible for the 3' incision and the C-terminal half is responsible for the 5' incision. This Bacteroides fragilis (strain ATCC 25285 / DSM 2151 / CCUG 4856 / JCM 11019 / LMG 10263 / NCTC 9343 / Onslow / VPI 2553 / EN-2) protein is UvrABC system protein C.